The chain runs to 221 residues: 3-dehydroquinate dehydratase (221 aa).

Residues Glu-33–Arg-35 and Arg-63 contribute to the 3-dehydroquinate site. The active-site Proton donor/acceptor is the His-118. Lys-144 serves as the catalytic Schiff-base intermediate with substrate. The 3-dehydroquinate site is built by Arg-181, Thr-200, and Gln-204.

It belongs to the type-I 3-dehydroquinase family. As to quaternary structure, homodimer.

It carries out the reaction 3-dehydroquinate = 3-dehydroshikimate + H2O. Its pathway is metabolic intermediate biosynthesis; chorismate biosynthesis; chorismate from D-erythrose 4-phosphate and phosphoenolpyruvate: step 3/7. Functionally, involved in the third step of the chorismate pathway, which leads to the biosynthesis of aromatic amino acids. Catalyzes the cis-dehydration of 3-dehydroquinate (DHQ) and introduces the first double bond of the aromatic ring to yield 3-dehydroshikimate. The sequence is that of 3-dehydroquinate dehydratase from Methanothermobacter thermautotrophicus (strain ATCC 29096 / DSM 1053 / JCM 10044 / NBRC 100330 / Delta H) (Methanobacterium thermoautotrophicum).